Consider the following 168-residue polypeptide: Photosystem I assembly protein Ycf3 (168 aa).

TPR repeat units lie at residues 35–68 (AFTYYRDGMSAQSEGNYAEALQNYYEAMRLEIDP), 72–105 (SYILYNIGLIHTSNGEHMKALEYYFRALERNPFL), and 120–153 (GEKAIQQGDSEIAEAWFDQAAEYWKQALALTPGN).

This sequence belongs to the Ycf3 family.

The protein localises to the plastid membrane. In terms of biological role, essential for the assembly of the photosystem I (PSI) complex. May act as a chaperone-like factor to guide the assembly of the PSI subunits. This is Photosystem I assembly protein Ycf3 from Cuscuta exaltata (Tall dodder).